Reading from the N-terminus, the 661-residue chain is DNA ligase (661 aa).

NAD(+) is bound by residues 31 to 35, 80 to 81, and Glu109; these read DSGYD and SL. Lys111 functions as the N6-AMP-lysine intermediate in the catalytic mechanism. NAD(+) contacts are provided by Arg132, Glu167, Lys283, and Lys307. Cys401, Cys404, Cys419, and Cys424 together coordinate Zn(2+). A BRCT domain is found at 582–661; it reads AGEQLLQGKT…AGFLNLLGLS (80 aa).

It belongs to the NAD-dependent DNA ligase family. LigA subfamily. It depends on Mg(2+) as a cofactor. Mn(2+) serves as cofactor.

It catalyses the reaction NAD(+) + (deoxyribonucleotide)n-3'-hydroxyl + 5'-phospho-(deoxyribonucleotide)m = (deoxyribonucleotide)n+m + AMP + beta-nicotinamide D-nucleotide.. DNA ligase that catalyzes the formation of phosphodiester linkages between 5'-phosphoryl and 3'-hydroxyl groups in double-stranded DNA using NAD as a coenzyme and as the energy source for the reaction. It is essential for DNA replication and repair of damaged DNA. In Syntrophomonas wolfei subsp. wolfei (strain DSM 2245B / Goettingen), this protein is DNA ligase.